The sequence spans 53 residues: Putative defensin-like protein 53 (53 aa).

Intrachain disulfides connect Cys-12-Cys-51, Cys-16-Cys-40, Cys-26-Cys-49, and Cys-30-Cys-50.

It belongs to the DEFL family.

This is Putative defensin-like protein 53 from Arabidopsis thaliana (Mouse-ear cress).